The following is a 139-amino-acid chain: uncharacterized protein (139 aa).

The segment covering 1–11 (MALSMSLSSDI) has biased composition (polar residues). Disordered regions lie at residues 1-80 (MALS…AAAA) and 100-139 (ASSP…LARS). The span at 63–80 (GAGSASAGGSRLAAAAAA) shows a compositional bias: low complexity.

This is an uncharacterized protein from Homo sapiens (Human).